An 832-amino-acid polypeptide reads, in one-letter code: Ventricular zone-expressed PH domain-containing protein homolog 1 (832 aa).

An interaction with TGFBR1 region spans residues 201–319 (AELLALMSQL…RYLVSQLANM (119 aa)). The segment at 497-519 (DTHGSQLRNSSASHPSIIHSEPE) is disordered. Residues 499 to 510 (HGSQLRNSSASH) show a composition bias toward polar residues. The interaction with TGFBR1 stretch occupies residues 663-832 (ESTFPQQKDL…RESREVTTYL (170 aa)). The PH domain maps to 716–818 (QPLIEGKLKE…WLQCINVALA (103 aa)).

It belongs to the MELT/VEPH family. Interacts with TGFBR1.

It localises to the cell membrane. Functionally, interacts with TGF-beta receptor type-1 (TGFBR1) and inhibits dissociation of activated SMAD2 from TGFBR1, impeding its nuclear accumulation and resulting in impaired TGF-beta signaling. May also affect FOXO, Hippo and Wnt signaling. This chain is Ventricular zone-expressed PH domain-containing protein homolog 1 (Veph1), found in Rattus norvegicus (Rat).